Reading from the N-terminus, the 153-residue chain is Ribosome maturation factor RimP (153 aa).

It belongs to the RimP family.

It is found in the cytoplasm. In terms of biological role, required for maturation of 30S ribosomal subunits. In Clostridium botulinum (strain 657 / Type Ba4), this protein is Ribosome maturation factor RimP.